A 141-amino-acid chain; its full sequence is Nucleoside diphosphate kinase (141 aa).

Residues Lys-9, Phe-57, Arg-85, Thr-91, Arg-102, and Asn-112 each contribute to the ATP site. His-115 serves as the catalytic Pros-phosphohistidine intermediate.

The protein belongs to the NDK family. As to quaternary structure, homotetramer. Mg(2+) is required as a cofactor.

The protein localises to the cytoplasm. It carries out the reaction a 2'-deoxyribonucleoside 5'-diphosphate + ATP = a 2'-deoxyribonucleoside 5'-triphosphate + ADP. The enzyme catalyses a ribonucleoside 5'-diphosphate + ATP = a ribonucleoside 5'-triphosphate + ADP. Major role in the synthesis of nucleoside triphosphates other than ATP. The ATP gamma phosphate is transferred to the NDP beta phosphate via a ping-pong mechanism, using a phosphorylated active-site intermediate. This chain is Nucleoside diphosphate kinase, found in Chlamydia trachomatis serovar A (strain ATCC VR-571B / DSM 19440 / HAR-13).